A 262-amino-acid chain; its full sequence is Small ribosomal subunit protein eS4B (262 aa).

Residues 42–105 (LPLIVFLRNR…GEHFRLVYDI (64 aa)) enclose the S4 RNA-binding domain. Ser-223 carries the phosphoserine modification.

It belongs to the eukaryotic ribosomal protein eS4 family. Component of the small ribosomal subunit (SSU). Mature yeast ribosomes consist of a small (40S) and a large (60S) subunit. The 40S small subunit contains 1 molecule of ribosomal RNA (18S rRNA) and at least 33 different proteins. The large 60S subunit contains 3 rRNA molecules (25S, 5.8S and 5S rRNA) and at least 46 different proteins.

Its subcellular location is the cytoplasm. It is found in the nucleus. It localises to the nucleolus. Its function is as follows. Component of the ribosome, a large ribonucleoprotein complex responsible for the synthesis of proteins in the cell. The small ribosomal subunit (SSU) binds messenger RNAs (mRNAs) and translates the encoded message by selecting cognate aminoacyl-transfer RNA (tRNA) molecules. The large subunit (LSU) contains the ribosomal catalytic site termed the peptidyl transferase center (PTC), which catalyzes the formation of peptide bonds, thereby polymerizing the amino acids delivered by tRNAs into a polypeptide chain. The nascent polypeptides leave the ribosome through a tunnel in the LSU and interact with protein factors that function in enzymatic processing, targeting, and the membrane insertion of nascent chains at the exit of the ribosomal tunnel. This Schizosaccharomyces pombe (strain 972 / ATCC 24843) (Fission yeast) protein is Small ribosomal subunit protein eS4B (rps402).